The chain runs to 79 residues: Cytoinsectotoxin-3 (79 aa).

The protein belongs to the cationic peptide 06 (cytoinsectotoxin) family. As to expression, expressed by the venom gland.

It is found in the secreted. Functionally, insecticidal and antimicrobial peptide. Has insecticidal activity against larvae of flesh fly S.carnaria. Has antibacterial activity against Gram-positive bacterium B.subtilis B-501 (MIC=0.63 uM) and Gram-negative bacterium E.coli DH5alpha (MIC=2.5 uM). This is Cytoinsectotoxin-3 from Lachesana tarabaevi (Spider).